Reading from the N-terminus, the 51-residue chain is Large ribosomal subunit protein bL33 (51 aa).

It belongs to the bacterial ribosomal protein bL33 family.

The chain is Large ribosomal subunit protein bL33 from Pseudoalteromonas atlantica (strain T6c / ATCC BAA-1087).